Consider the following 668-residue polypeptide: SHC SH2 domain-binding protein 1 (668 aa).

Alanine 2 is modified (N-acetylalanine). Residues serine 31, serine 44, and serine 273 each carry the phosphoserine modification. PbH1 repeat units follow at residues 428-451 (GMDV…LIIH), 452-473 (HGKT…TVRT), 474-496 (SAEL…EIYP), 497-518 (GSKC…LIKD), and 526-548 (IPKI…VLVK). Phosphoserine is present on serine 630.

In terms of assembly, interacts directly with isoform p52shc of SHC1 via its SH2 domain. Interacts with TRIM71; leading to enhanced SHCBP1 protein stability. Interacts with both members of the centralspindlin complex, KIF23 and RACGAP1. As to expression, expressed in spleen, lung and heart with higher expression in testis. No expression in brain, liver and skeletal muscle. Elevated expression in actively cycling cells.

The protein localises to the midbody. The protein resides in the cytoplasm. It is found in the cytoskeleton. It localises to the spindle. Functionally, may play a role in signaling pathways governing cellular proliferation, cell growth and differentiation. May be a component of a novel signaling pathway downstream of Shc. Acts as a positive regulator of FGF signaling in neural progenitor cells. This Mus musculus (Mouse) protein is SHC SH2 domain-binding protein 1 (Shcbp1).